Reading from the N-terminus, the 416-residue chain is Adenylosuccinate synthetase (416 aa).

Residues 13-19 (GDEGKGK) and 41-43 (GHT) contribute to the GTP site. Asp-14 serves as the catalytic Proton acceptor. Mg(2+) is bound by residues Asp-14 and Gly-41. Residues 14 to 17 (DEGK), 39 to 42 (NAGH), Thr-126, Arg-140, Gln-220, Thr-235, and Arg-299 each bind IMP. The Proton donor role is filled by His-42. 295 to 301 (TTTGRKR) is a substrate binding site. GTP contacts are provided by residues Arg-301, 327–329 (KLD), and 405–407 (STS).

The protein belongs to the adenylosuccinate synthetase family. As to quaternary structure, homodimer. The cofactor is Mg(2+).

Its subcellular location is the cytoplasm. It catalyses the reaction IMP + L-aspartate + GTP = N(6)-(1,2-dicarboxyethyl)-AMP + GDP + phosphate + 2 H(+). Its pathway is purine metabolism; AMP biosynthesis via de novo pathway; AMP from IMP: step 1/2. Plays an important role in the de novo pathway of purine nucleotide biosynthesis. Catalyzes the first committed step in the biosynthesis of AMP from IMP. This chain is Adenylosuccinate synthetase, found in Campylobacter fetus subsp. fetus (strain 82-40).